We begin with the raw amino-acid sequence, 265 residues long: 4-hydroxy-tetrahydrodipicolinate reductase (265 aa).

NAD(+)-binding positions include 7 to 12 (GASGRM), D33, 96 to 98 (GTT), and 120 to 123 (AANM). The Proton donor/acceptor role is filled by H153. H154 provides a ligand contact to (S)-2,3,4,5-tetrahydrodipicolinate. The active-site Proton donor is the K157. 163 to 164 (GT) lines the (S)-2,3,4,5-tetrahydrodipicolinate pocket.

This sequence belongs to the DapB family.

It is found in the cytoplasm. It carries out the reaction (S)-2,3,4,5-tetrahydrodipicolinate + NAD(+) + H2O = (2S,4S)-4-hydroxy-2,3,4,5-tetrahydrodipicolinate + NADH + H(+). The enzyme catalyses (S)-2,3,4,5-tetrahydrodipicolinate + NADP(+) + H2O = (2S,4S)-4-hydroxy-2,3,4,5-tetrahydrodipicolinate + NADPH + H(+). It functions in the pathway amino-acid biosynthesis; L-lysine biosynthesis via DAP pathway; (S)-tetrahydrodipicolinate from L-aspartate: step 4/4. Catalyzes the conversion of 4-hydroxy-tetrahydrodipicolinate (HTPA) to tetrahydrodipicolinate. The sequence is that of 4-hydroxy-tetrahydrodipicolinate reductase from Cupriavidus pinatubonensis (strain JMP 134 / LMG 1197) (Cupriavidus necator (strain JMP 134)).